The chain runs to 368 residues: Glutaminyl-peptide cyclotransferase (368 aa).

The first 23 residues, 1–23 (MAGERRDSKAAAFFCLAWALCLA), serve as a signal peptide directing secretion. N-linked (GlcNAc...) asparagine glycosylation is present at asparagine 53. An intrachain disulfide couples cysteine 143 to cysteine 169. Aspartate 164 lines the Zn(2+) pocket. Residue glutamate 207 is the Proton acceptor of the active site. Glutamate 208 is a binding site for Zn(2+). Aspartate 254 functions as the Proton acceptor in the catalytic mechanism. An N-linked (GlcNAc...) asparagine glycan is attached at asparagine 292. Residue histidine 336 participates in Zn(2+) binding. A glycan (N-linked (GlcNAc...) asparagine) is linked at asparagine 352.

The protein belongs to the glutaminyl-peptide cyclotransferase family. In terms of tissue distribution, expressed by the venom gland.

The protein resides in the secreted. It carries out the reaction N-terminal L-glutaminyl-[peptide] = N-terminal 5-oxo-L-prolyl-[peptide] + NH4(+). Functionally, responsible for the biosynthesis of pyroglutamyl peptides. Has a bias against acidic and tryptophan residues adjacent to the N-terminal glutaminyl residue and a lack of importance of chain length after the second residue. Also catalyzes N-terminal pyroglutamate formation. The protein is Glutaminyl-peptide cyclotransferase (QPCT) of Boiga dendrophila (Mangrove snake).